Consider the following 148-residue polypeptide: Protein ORM1 (148 aa).

A run of 4 helical transmembrane segments spans residues 12-32, 36-56, 89-109, and 111-131; these read WIIH…FPGV, WSWT…FHLI, FLII…HYDL, and MFSW…LPVT.

The protein to yeast YLR350W C-terminus.

The protein localises to the membrane. In Saccharomyces pastorianus (strain ATCC 76670 / Carlsberg bottom yeast no.2 / CBS 1503 / CLIB 180 / NBRC 10610 / NRRL Y-1525) (Saaz-type lager yeast), this protein is Protein ORM1 (ORM1).